The following is a 133-amino-acid chain: Small ribosomal subunit protein uS8 (133 aa).

The disordered stretch occupies residues 1–28 (MANHDPISDMLTRIRNASEKRHEKTKVP). The span at 16–26 (NASEKRHEKTK) shows a compositional bias: basic and acidic residues.

It belongs to the universal ribosomal protein uS8 family. As to quaternary structure, part of the 30S ribosomal subunit. Contacts proteins S5 and S12.

Its function is as follows. One of the primary rRNA binding proteins, it binds directly to 16S rRNA central domain where it helps coordinate assembly of the platform of the 30S subunit. In Prochlorococcus marinus (strain NATL2A), this protein is Small ribosomal subunit protein uS8.